The chain runs to 432 residues: Trigger factor (432 aa).

Residues 165–250 form the PPIase FKBP-type domain; the sequence is GDFAKIDFEG…LKEIQVKAPQ (86 aa).

Belongs to the FKBP-type PPIase family. Tig subfamily.

It localises to the cytoplasm. The enzyme catalyses [protein]-peptidylproline (omega=180) = [protein]-peptidylproline (omega=0). Functionally, involved in protein export. Acts as a chaperone by maintaining the newly synthesized protein in an open conformation. Functions as a peptidyl-prolyl cis-trans isomerase. The sequence is that of Trigger factor from Wolinella succinogenes (strain ATCC 29543 / DSM 1740 / CCUG 13145 / JCM 31913 / LMG 7466 / NCTC 11488 / FDC 602W) (Vibrio succinogenes).